A 993-amino-acid chain; its full sequence is UPF0182 protein Sare_4110 (993 aa).

The next 7 helical transmembrane spans lie at 18-38, 61-81, 110-130, 171-191, 209-229, 260-280, and 283-303; these read IGVLVGVFVLFTLLGWGVQAW, LLLFVTVGLAMAVVVGGNLWL, LGTWFAVVSVVVGLFAGLSAQ, GVAFTAVVLALIGALAVHYVF, AHLSALVAVFVLLKAVAYVLD, ILAYISVVVAIAVLVFSNAWM, and LVWPGISLALLGVSAVAIGGI. 2 disordered regions span residues 892 to 937 and 974 to 993; these read QGEK…ADAA and EQAAGPGSAATPTGSPSPGG. Residues 900 to 929 show a composition bias toward pro residues; the sequence is STPPPSGETPAPTPTPTPTPSSPSVTPPPV. Residues 976 to 993 show a composition bias toward low complexity; that stretch reads AAGPGSAATPTGSPSPGG.

Belongs to the UPF0182 family.

The protein resides in the cell membrane. This is UPF0182 protein Sare_4110 from Salinispora arenicola (strain CNS-205).